The following is a 179-amino-acid chain: Bifunctional protein PyrR (179 aa).

The PRPP-binding signature appears at isoleucine 97 to threonine 109.

This sequence belongs to the purine/pyrimidine phosphoribosyltransferase family. PyrR subfamily.

The enzyme catalyses UMP + diphosphate = 5-phospho-alpha-D-ribose 1-diphosphate + uracil. Its function is as follows. Regulates the transcription of the pyrimidine nucleotide (pyr) operon in response to exogenous pyrimidines. In terms of biological role, also displays a weak uracil phosphoribosyltransferase activity which is not physiologically significant. This chain is Bifunctional protein PyrR, found in Elusimicrobium minutum (strain Pei191).